We begin with the raw amino-acid sequence, 523 residues long: Asparagine--tRNA ligase (523 aa).

Residues 329–350 (SARGDTPLAARSTARTPPVRTP) form a disordered region.

This sequence belongs to the class-II aminoacyl-tRNA synthetase family. In terms of assembly, homodimer.

The protein localises to the cytoplasm. It catalyses the reaction tRNA(Asn) + L-asparagine + ATP = L-asparaginyl-tRNA(Asn) + AMP + diphosphate + H(+). The polypeptide is Asparagine--tRNA ligase (Treponema pallidum (strain Nichols)).